The sequence spans 321 residues: MKKIMITGALGQIGTELVVKCREIYGTDNVLATDIREPEADSPVQNGPFEILDVTDRDRMFELVRDFEADSLMHMAALLSATAEKNPILAWDLNMGGLMNALEAARTYNLHFFTPSSIGAFGDSTPKVNTPQVTIQQPTTMYGVNKVAGELLCQYYFTRFGVDTRSVRFPGLISHVKEPGGGTTDYAVEIYFKAVREGHYTSFIDKGTYMDMMYMDDAIDAIIKLMEADDAKLETRNGYNLSAMSFDPEMVKEAIQEYYPDFKLEYDVDPIRQGIANSWPDSIDTSCSRGEWGFDPKYDLVSMTKLMLEAIEQKDTVKNNN.

Belongs to the NAD(P)-dependent epimerase/dehydratase family.

This is an uncharacterized protein from Staphylococcus aureus (strain MRSA252).